Consider the following 522-residue polypeptide: Protein nucleotidyltransferase YdiU (522 aa).

ATP contacts are provided by Gly-109, Gly-111, Arg-112, Lys-132, Asp-144, Gly-145, Arg-195, and Arg-202. Asp-271 acts as the Proton acceptor in catalysis. Asn-272 and Asp-281 together coordinate Mg(2+). Asp-281 serves as a coordination point for ATP.

The protein belongs to the SELO family. Requires Mg(2+) as cofactor. Mn(2+) is required as a cofactor.

The catalysed reaction is L-seryl-[protein] + ATP = 3-O-(5'-adenylyl)-L-seryl-[protein] + diphosphate. It carries out the reaction L-threonyl-[protein] + ATP = 3-O-(5'-adenylyl)-L-threonyl-[protein] + diphosphate. It catalyses the reaction L-tyrosyl-[protein] + ATP = O-(5'-adenylyl)-L-tyrosyl-[protein] + diphosphate. The enzyme catalyses L-histidyl-[protein] + UTP = N(tele)-(5'-uridylyl)-L-histidyl-[protein] + diphosphate. The catalysed reaction is L-seryl-[protein] + UTP = O-(5'-uridylyl)-L-seryl-[protein] + diphosphate. It carries out the reaction L-tyrosyl-[protein] + UTP = O-(5'-uridylyl)-L-tyrosyl-[protein] + diphosphate. Its function is as follows. Nucleotidyltransferase involved in the post-translational modification of proteins. It can catalyze the addition of adenosine monophosphate (AMP) or uridine monophosphate (UMP) to a protein, resulting in modifications known as AMPylation and UMPylation. The chain is Protein nucleotidyltransferase YdiU from Burkholderia orbicola (strain MC0-3).